A 195-amino-acid polypeptide reads, in one-letter code: Envelope glycoprotein L (195 aa).

The signal sequence occupies residues 1–25 (MKIYRVLVHLSFVLGMFTKTNTVLA). The segment at 28-157 (KYDLVHGFMR…LIAPADISCY (130 aa)) is interaction with gH. The gL alphaherpesvirus-type domain occupies 28-195 (KYDLVHGFMR…TTSGSRRANA (168 aa)). 2 cysteine pairs are disulfide-bonded: Cys49–Cys78 and Cys156–Cys178.

It belongs to the herpesviridae glycoprotein L (gL) family. Alphaherpesvirinae gL subfamily. In terms of assembly, interacts with glycoprotein H (gH); this interaction is necessary for the correct processing and cell surface expression of gH. The heterodimer gH/gL seems to interact with gB trimers during fusion.

Its subcellular location is the virion membrane. It localises to the host cell membrane. The protein resides in the host Golgi apparatus. It is found in the host trans-Golgi network. In terms of biological role, the heterodimer glycoprotein H-glycoprotein L is required for the fusion of viral and plasma membranes leading to virus entry into the host cell. Acts as a functional inhibitor of gH and maintains gH in an inhibited form. Upon binding to host integrins, gL dissociates from gH leading to activation of the viral fusion glycoproteins gB and gH. In Gallus gallus (Chicken), this protein is Envelope glycoprotein L.